Reading from the N-terminus, the 64-residue chain is MKNIELASKDLNALNVELTELLKTGFKLRMQKGTQQLTNTSQLGKNKRDIARVKTFIAQKTAQK.

It belongs to the universal ribosomal protein uL29 family.

In Polynucleobacter necessarius subsp. necessarius (strain STIR1), this protein is Large ribosomal subunit protein uL29.